A 42-amino-acid chain; its full sequence is Large ribosomal subunit protein bL36 (42 aa).

This sequence belongs to the bacterial ribosomal protein bL36 family.

The protein is Large ribosomal subunit protein bL36 of Wolbachia sp. subsp. Brugia malayi (strain TRS).